Here is a 367-residue protein sequence, read N- to C-terminus: Quinolinate synthase (367 aa).

Iminosuccinate is bound by residues His45 and Ser62. Cys109 is a binding site for [4Fe-4S] cluster. Residues 140-142 (YVN) and Ser161 each bind iminosuccinate. Position 229 (Cys229) interacts with [4Fe-4S] cluster. Residues 255 to 257 (HPE) and Thr272 contribute to the iminosuccinate site. A [4Fe-4S] cluster-binding site is contributed by Cys319.

This sequence belongs to the quinolinate synthase family. Type 3 subfamily. [4Fe-4S] cluster is required as a cofactor.

The protein localises to the cytoplasm. It carries out the reaction iminosuccinate + dihydroxyacetone phosphate = quinolinate + phosphate + 2 H2O + H(+). The protein operates within cofactor biosynthesis; NAD(+) biosynthesis; quinolinate from iminoaspartate: step 1/1. Its function is as follows. Catalyzes the condensation of iminoaspartate with dihydroxyacetone phosphate to form quinolinate. This Geobacillus kaustophilus (strain HTA426) protein is Quinolinate synthase.